We begin with the raw amino-acid sequence, 65 residues long: 7 kDa A-type inclusion protein (65 aa).

Residues 1–20 (MSNQNIPQLSEYQTSVSQVA) are compositionally biased toward polar residues. The segment at 1–32 (MSNQNIPQLSEYQTSVSQVAVTPPPKPKTPQI) is disordered.

The protein is 7 kDa A-type inclusion protein of Bos taurus (Bovine).